Here is a 453-residue protein sequence, read N- to C-terminus: V-type proton ATPase subunit B (453 aa).

Arginine 341 contacts ATP.

It belongs to the ATPase alpha/beta chains family. As to quaternary structure, V-ATPase is a heteromultimeric enzyme made up of two complexes: the ATP-hydrolytic V1 complex and the proton translocation V0 complex. The V1 complex consists of three catalytic AB heterodimers that form a heterohexamer, three peripheral stalks each consisting of EG heterodimers, one central rotor including subunits D and F, and the regulatory subunits C and H. The proton translocation complex V0 consists of the proton transport subunit a, a ring of proteolipid subunits c9c'', rotary subunit d, subunits e and f, and two accessory subunits.

Non-catalytic subunit of the V1 complex of vacuolar(H+)-ATPase (V-ATPase), a multisubunit enzyme composed of a peripheral complex (V1) that hydrolyzes ATP and a membrane integral complex (V0) that translocates protons. V-ATPase is responsible for acidifying and maintaining the pH of intracellular compartments and in some cell types, is targeted to the plasma membrane, where it is responsible for acidifying the extracellular environment. Essential for the proper assembly and activity of V-ATPase. This is V-type proton ATPase subunit B (ATP6V1B) from Gallus gallus (Chicken).